The primary structure comprises 281 residues: DegV domain-containing protein spr0652 (281 aa).

Residues 3–280 enclose the DegV domain; sequence WKIIADSGCD…EGGLLMGYEI (278 aa). The hexadecanoate site is built by Ser63 and Ser91.

In terms of biological role, may bind long-chain fatty acids, such as palmitate, and may play a role in lipid transport or fatty acid metabolism. The protein is DegV domain-containing protein spr0652 of Streptococcus pneumoniae (strain ATCC BAA-255 / R6).